A 233-amino-acid polypeptide reads, in one-letter code: Small ribosomal subunit protein uS3 (233 aa).

Residues 39-107 form the KH type-2 domain; the sequence is VRQYLKKELA…PAQINISEVR (69 aa).

The protein belongs to the universal ribosomal protein uS3 family. Part of the 30S ribosomal subunit. Forms a tight complex with proteins S10 and S14.

In terms of biological role, binds the lower part of the 30S subunit head. Binds mRNA in the 70S ribosome, positioning it for translation. The protein is Small ribosomal subunit protein uS3 of Photorhabdus laumondii subsp. laumondii (strain DSM 15139 / CIP 105565 / TT01) (Photorhabdus luminescens subsp. laumondii).